We begin with the raw amino-acid sequence, 177 residues long: uncharacterized protein (177 aa).

2 stretches are compositionally biased toward low complexity: residues Asn-78–Asn-93 and Ser-120–Asn-130. Positions Asn-78–Asn-146 are disordered. Basic residues predominate over residues His-131 to Asn-146.

This is an uncharacterized protein from Dictyostelium discoideum (Social amoeba).